The chain runs to 521 residues: GGGGQSFLAADNAVLVSTQCYKRHSYVEIPSNLLVQNGMSLKDGANLYVYKRVNGAFVTLPNTLNTQGRSYETFEPRSDVERDFLDMSEEDFVEKYGKDLGLQHILYGEVDKPQLGGLHTVIGMYRLLRANKLNAKSVTNSDSDVMQNYFVLADNGSYKQVCTVVDLLLDDFLELLRNILNEYGTNKSKVVTVSIDYHSINFMTWFEDGSIKTCYPQLQSAWTCGYNMPELYKVQNCVMEPCNIPNYGVGITLPSGIMMNVAKYTQLCQYLSKTTVCVPHNMRVMHFGAGSDKGVAPGSTVLKQWLPEGTLLVDTDIVDYVSDAHVSVLSDCNKYKTEHKFDLVISDMYTDNDSKRKHGGVIANNGNDDVFIYLSSFLRNNLALGGSFAVKLTETSWHESLYDIAQDCAWWTMFCTAVNASSSEAFLIGVNYLGASVKVKVSGKTLHANYIFWRNCNYLQTSAYSIFDVAKFDLRLKATPVVNLKTEQKTDLVFNLIKCGKLLVRDVGNTSFTSDSFVCTM.

Residues 1–58 enclose the AV-Nsp11N/CoV-Nsp15M domain; that stretch reads GGGGQSFLAADNAVLVSTQCYKRHSYVEIPSNLLVQNGMSLKDGANLYVYKRVNGAFV. The 142-residue stretch at 75–216 folds into the NendoU domain; that stretch reads EPRSDVERDF…EDGSIKTCYP (142 aa). Residues His104, His119, Lys159, Lys263, Asp347, Lys391, and Glu424 contribute to the active site. The 300-residue stretch at 219-518 folds into the Nidovirus-type SAM-dependent 2'-O-MTase domain; sequence QSAWTCGYNM…NTSFTSDSFV (300 aa).

The replicase polyprotein of coronaviruses is a multifunctional protein: it contains the activities necessary for the transcription of negative stranded RNA, leader RNA, subgenomic mRNAs and progeny virion RNA as well as proteinases responsible for the cleavage of the polyprotein into functional products. Its function is as follows. NendoU is a Mn(2+)-dependent, uridylate-specific enzyme, which leaves 2'-3'-cyclic phosphates 5' to the cleaved bond. The protein is Replicase polyprotein 1ab (rep) of Gallus gallus (Chicken).